The primary structure comprises 499 residues: BTB/POZ domain-containing protein At5g60050 (499 aa).

A compositionally biased stretch (low complexity) spans 18–30; that stretch reads PSLSFSPSRISSP. Residues 18 to 57 form a disordered region; that stretch reads PSLSFSPSRISSPIKLSTASPPLPPPPPPPPNESTLSNPT. Pro residues predominate over residues 38–49; that stretch reads PPLPPPPPPPPN. Positions 99-172 constitute a BTB domain; the sequence is GDVKLTVVGK…MYSDDLKKKL (74 aa).

The protein operates within protein modification; protein ubiquitination. Its function is as follows. May act as a substrate-specific adapter of an E3 ubiquitin-protein ligase complex (CUL3-RBX1-BTB) which mediates the ubiquitination and subsequent proteasomal degradation of target proteins. The protein is BTB/POZ domain-containing protein At5g60050 of Arabidopsis thaliana (Mouse-ear cress).